The primary structure comprises 546 residues: Cytochrome P450 monooxygenase 219 (546 aa).

The first 22 residues, 1–22 (MATLIVLLYGLLAFGTVWLVRR), serve as a signal peptide directing secretion. N-linked (GlcNAc...) asparagine glycosylation is found at Asn367 and Asn441. Residue Cys487 coordinates heme.

The protein belongs to the cytochrome P450 family. The cofactor is heme.

It functions in the pathway secondary metabolite biosynthesis. Cytochrome P450 monooxygenase that is able to use testosterone, anthracene, carbazole, pyrene, phenanthrene and trans-stilbene as substrates for oxidation. These multifunctional properties against a series of polycyclic aromatic hydrocarbons (PAHs) suggest that CYP219 would play important roles, at least in part, in fungal metabolic systems involved in xenobiotic detoxification. The protein is Cytochrome P450 monooxygenase 219 of Postia placenta (strain ATCC 44394 / Madison 698-R) (Brown rot fungus).